Consider the following 68-residue polypeptide: uncharacterized protein (68 aa).

Residues 1-68 (METIIRRFSP…GNSKNIKTKK (68 aa)) form a disordered region. Positions 9–34 (SPKEKEKEKEKEEKDEKSKDKKEPIK) are enriched in basic and acidic residues. Residues 42 to 51 (DEEEEEDEQE) show a composition bias toward acidic residues.

This is an uncharacterized protein from Dictyostelium discoideum (Social amoeba).